We begin with the raw amino-acid sequence, 475 residues long: Ankyrin repeat, SAM and basic leucine zipper domain-containing protein 1 (475 aa).

The disordered stretch occupies residues 1–38 (MATGSLRGLAVAGGGESSDSEDDGWEIGYLDRPPQKLK). Phosphoserine occurs at positions 17, 18, and 20. 6 ANK repeats span residues 45–74 (EKNE…SVDS), 78–107 (YGWT…NASF), 110–144 (DKQT…DPNV), 148–177 (RLMT…EVNI), 181–210 (NGYT…NKTL), and 214–243 (DGKT…PLEG). The SAM domain maps to 272–334 (SYTAFGDLEI…KILAALKELE (63 aa)).

Interacts with DDX4, PIWIL1, RANBP9 and TDRD1.

It is found in the cytoplasm. Its function is as follows. Plays a central role during spermatogenesis by repressing transposable elements and preventing their mobilization, which is essential for the germline integrity. Acts via the piRNA metabolic process, which mediates the repression of transposable elements during meiosis by forming complexes composed of piRNAs and Piwi proteins and governs the methylation and subsequent repression of transposons. Its association with pi-bodies suggests a participation in the primary piRNAs metabolic process. Required prior to the pachytene stage to facilitate the production of multiple types of piRNAs, including those associated with repeats involved in the regulation of retrotransposons. May act by mediating protein-protein interactions during germ cell maturation. This Oryctolagus cuniculus (Rabbit) protein is Ankyrin repeat, SAM and basic leucine zipper domain-containing protein 1 (ASZ1).